Here is a 152-residue protein sequence, read N- to C-terminus: Protein SprT-like (152 aa).

In terms of domain architecture, SprT-like spans 6–151 (LQQLVCRISL…SKCLGKLELL (146 aa)). H67 serves as a coordination point for Zn(2+). The active site involves E68. H71 serves as a coordination point for Zn(2+).

The protein belongs to the SprT family. It depends on Zn(2+) as a cofactor.

It localises to the cytoplasm. The sequence is that of Protein SprT-like from Lysinibacillus sphaericus (strain C3-41).